The following is a 412-amino-acid chain: uncharacterized protein (412 aa).

Disordered stretches follow at residues 150-171 (NTPG…QLGD), 177-196 (QITS…QQQQ), and 302-412 (QAQQ…PLNP). Positions 156–168 (QAQQQQQQQQQQQ) are enriched in low complexity. 2 stretches are compositionally biased toward polar residues: residues 177–187 (QITSSNNSGNS) and 310–321 (MGSSPTHSSPTI). Residues 335 to 345 (GGIINTNTNLN) show a composition bias toward low complexity. Residues 350-363 (VSPNQPMPNSSPIL) show a composition bias toward polar residues. 2 stretches are compositionally biased toward low complexity: residues 364–373 (PTNASSVVPP) and 381–394 (TSNN…TTSP).

This is an uncharacterized protein from Dictyostelium discoideum (Social amoeba).